We begin with the raw amino-acid sequence, 206 residues long: MARYIGPKCKLSRREGTDLFLKSGVRALESKCNIEAAPGIHGQRRGRQSDYGTQLREKQKVRRIYGVLERQFRGYYQAAASKKGATGENLLQLLECRLDNVVYRMGFGSTRSESRQLVSHKAISVNGKTVNIPSYQVRPGDVVAVREKSSNQLRIVQALELCAQRGRVEWVDVDSAKKSGVFKNVPARGDLSADINENLIVELYSK.

The 61-residue stretch at 96-156 (CRLDNVVYRM…EKSSNQLRIV (61 aa)) folds into the S4 RNA-binding domain.

The protein belongs to the universal ribosomal protein uS4 family. As to quaternary structure, part of the 30S ribosomal subunit. Contacts protein S5. The interaction surface between S4 and S5 is involved in control of translational fidelity.

Its function is as follows. One of the primary rRNA binding proteins, it binds directly to 16S rRNA where it nucleates assembly of the body of the 30S subunit. Functionally, with S5 and S12 plays an important role in translational accuracy. In Pseudomonas putida (strain W619), this protein is Small ribosomal subunit protein uS4.